The chain runs to 499 residues: MNGAEELPEMYDYDLIIIGGGSGGLAAAKEAARFNKRVMVLDFVTPTPLGTRWGLGGTCVNVSCIPKKLMHQAALLGQALRDSRNYGWNVEETIKHDWERMTEAVQNHIGSLNWGYRVALREKKVTYENAYGQFVGPHRIKATNNKGKEKIYSAEKFLIATGERPRYLGIPGDKEYCISSDDLFSLPYCPGKTLVVGASYVALECAGFLAGIGLDVTVMVRSILLRGFDQDMANKIGEHMEEHGIKFIRQFVPIKVEQIEAGTPGRLRVVAQSTNSEEIIEGEYNTVMLAIGRDACTRKIGLETVGVKINEKTGKIPVTDEEQTNVPYIYAIGDILEDKVELTPVAIQAGRLLAQRLYAGSTVKCDYENVPTTVFTPLEYGACGLSEEKAVEKFGEENIEVYHSYFWPLEWTIPSRDNNKCYAKIICNTKDNERVVGFHVLGPNAGEVTQGFAAALKCGLTKKQLDSTIGIHPVCAEVFTTLSVTKRSGASILQAGCUG.

Residues 22–23 (SG), 42–43 (DF), 58–59 (TC), and 63–67 (SCIPK) each bind FAD. The cysteines at positions 59 and 64 are disulfide-linked. At lysine 68 the chain carries N6-succinyllysine. At tyrosine 131 the chain carries Phosphotyrosine. FAD contacts are provided by residues 131 to 132 (YG) and threonine 161. NADP(+)-binding positions include arginine 166, 198 to 204 (ASYVALE), 221 to 222 (RS), arginine 226, 226 to 228 (RGF), 292 to 293 (GR), and lysine 315. Residue tyrosine 200 participates in FAD binding. Residues aspartate 334, 341–343 (ELT), and histidine 472 each bind FAD. Glutamate 341 serves as a coordination point for NADP(+). Histidine 472 (proton acceptor) is an active-site residue. The cysteinyl-selenocysteine (Cys-Sec) cross-link spans 497-498 (CU). A non-standard amino acid (selenocysteine) is located at residue selenocysteine 498.

This sequence belongs to the class-I pyridine nucleotide-disulfide oxidoreductase family. In terms of assembly, homodimer. The cofactor is FAD. Post-translationally, ISGylated.

It localises to the cytoplasm. It catalyses the reaction [thioredoxin]-dithiol + NADP(+) = [thioredoxin]-disulfide + NADPH + H(+). The enzyme catalyses H2O2 + NADPH + H(+) = NADP(+) + 2 H2O. Its function is as follows. Reduces disulfideprotein thioredoxin (Trx) to its dithiol-containing form. Homodimeric flavoprotein involved in the regulation of cellular redox reactions, growth and differentiation. Contains a selenocysteine residue at the C-terminal active site that is essential for catalysis. Also has reductase activity on hydrogen peroxide (H2O2). This Sus scrofa (Pig) protein is Thioredoxin reductase 1, cytoplasmic (TXNRD1).